Reading from the N-terminus, the 370-residue chain is uncharacterized protein (370 aa).

This sequence belongs to the metallo-dependent hydrolases superfamily.

This is an uncharacterized protein from Mycobacterium bovis (strain ATCC BAA-935 / AF2122/97).